The sequence spans 537 residues: MWDSSMFLSTLTPKFYVALTGTSSLISGLILIFEWWYFRKYGTSFIEQVSINHISPWINGSDGQSESSNGSGSSSSSGSSSSSNGGAGGGGSGGAGASGSGSATTSTGTQMPECKVWRNPLNLFRGAEYQRFFWATSKEPLTYYDMNLSAQDHQTFFTCEGDARKEEYEIMQTAWRERNPMQRIKSAHSALEINAECAPAYILLAEEEAMTIMEAEKILKTALKVAEINYRKSQATQHQGAIADGMHRRDTNVLIYIKRRLAMCARKLGKLKEAAKMFRDLTKEIPSIMSVLNIHENLIETLLEMQAYADCHAILAKYDDISLPKSATICYTAALLKARAVADKFSPDIASKRGLSQAEMSAVEAIHRAVEFNPHVPKYLLETKRLILPPEHILKRGDSEALAYAFFHLKHWKQVEGALNLLHCTWEGTFRMLPYPLERGHLFYPYPTCTECADRELLPAFHEVSVYPKKELPFFILFTAGLCSITALLALATHQYPEPMGHLAQTVLTWISYPFQLLKERIEAFWPCNLLQQLSRV.

The chain crosses the membrane as a helical span at residues 15–35; sequence FYVALTGTSSLISGLILIFEW. The segment at 61-111 is disordered; the sequence is SDGQSESSNGSGSSSSSGSSSSSNGGAGGGGSGGAGASGSGSATTSTGTQM. A compositionally biased stretch (low complexity) spans 67-84; that stretch reads SSNGSGSSSSSGSSSSSN. The segment covering 85 to 99 has biased composition (gly residues); that stretch reads GGAGGGGSGGAGASG. Over residues 100 to 109 the composition is skewed to low complexity; the sequence is SGSATTSTGT. The chain crosses the membrane as a helical span at residues 472–492; sequence LPFFILFTAGLCSITALLALA.

The protein belongs to the ST7 family.

The protein localises to the membrane. In Drosophila melanogaster (Fruit fly), this protein is Protein ST7 homolog.